A 326-amino-acid chain; its full sequence is Beta-ketoacyl-[acyl-carrier-protein] synthase III 2 (326 aa).

Residues Cys114 and His251 contribute to the active site. An ACP-binding region spans residues 252-256; sequence SANAR. Asn281 is an active-site residue.

The protein belongs to the thiolase-like superfamily. FabH family. In terms of assembly, homodimer.

The protein resides in the cytoplasm. It catalyses the reaction malonyl-[ACP] + acetyl-CoA + H(+) = 3-oxobutanoyl-[ACP] + CO2 + CoA. Its pathway is lipid metabolism; fatty acid biosynthesis. In terms of biological role, catalyzes the condensation reaction of fatty acid synthesis by the addition to an acyl acceptor of two carbons from malonyl-ACP. Catalyzes the first condensation reaction which initiates fatty acid synthesis and may therefore play a role in governing the total rate of fatty acid production. Possesses both acetoacetyl-ACP synthase and acetyl transacylase activities. Its substrate specificity determines the biosynthesis of branched-chain and/or straight-chain of fatty acids. The sequence is that of Beta-ketoacyl-[acyl-carrier-protein] synthase III 2 from Staphylococcus epidermidis (strain ATCC 12228 / FDA PCI 1200).